Here is a 114-residue protein sequence, read N- to C-terminus: Large ribosomal subunit protein bL17 (114 aa).

Belongs to the bacterial ribosomal protein bL17 family. Part of the 50S ribosomal subunit. Contacts protein L32.

In Elusimicrobium minutum (strain Pei191), this protein is Large ribosomal subunit protein bL17.